The primary structure comprises 269 residues: GVSGSCNIDVVCPEGNGHRDVIRSVAAYSKQGTMWCTGSLVNNSANDKKMYFLTANHCGMTTAAIASSMVVYWNYQNSTCRAPGSSSSGANGDGSLAQSQTGAVVRATNAASDFTLLELNTAANPAYNLFWAGWDRRDQNFAGATAIHHPNVAEKRISHSTVATEISGYNGATGTSHLHVFWQASGGVTEPGSSGSPIYSPEKRVLGQLHGGPSSCSATGADRSDYYGRVFTSWTGGGTSATRLSDWLDAAGTGAQFIDGLDSTGTPPV.

3 cysteine pairs are disulfide-bonded: Cys6–Cys216, Cys12–Cys80, and Cys36–Cys58. Active-site charge relay system residues include His57, Asp113, and Ser194.

The protein belongs to the peptidase S1 family.

It localises to the secreted. It catalyses the reaction Preferential cleavage: Lys-|-Xaa, including Lys-|-Pro.. Highly specific endopeptidase that hydrolyzes lysyl bonds including the Lys-Pro bond. This Lysobacter enzymogenes protein is Lysyl endopeptidase.